Here is a 194-residue protein sequence, read N- to C-terminus: NADH-quinone oxidoreductase subunit B 1 (194 aa).

Cys-47, Cys-48, Cys-113, and Cys-142 together coordinate [4Fe-4S] cluster.

The protein belongs to the complex I 20 kDa subunit family. As to quaternary structure, NDH-1 is composed of 14 different subunits. Subunits NuoB, C, D, E, F, and G constitute the peripheral sector of the complex. Requires [4Fe-4S] cluster as cofactor.

It is found in the cell inner membrane. The catalysed reaction is a quinone + NADH + 5 H(+)(in) = a quinol + NAD(+) + 4 H(+)(out). Its function is as follows. NDH-1 shuttles electrons from NADH, via FMN and iron-sulfur (Fe-S) centers, to quinones in the respiratory chain. The immediate electron acceptor for the enzyme in this species is believed to be ubiquinone. Couples the redox reaction to proton translocation (for every two electrons transferred, four hydrogen ions are translocated across the cytoplasmic membrane), and thus conserves the redox energy in a proton gradient. In Sorangium cellulosum (strain So ce56) (Polyangium cellulosum (strain So ce56)), this protein is NADH-quinone oxidoreductase subunit B 1.